The sequence spans 393 residues: NAD(P)H-quinone oxidoreductase subunit H, chloroplastic (393 aa).

This sequence belongs to the complex I 49 kDa subunit family. NDH is composed of at least 16 different subunits, 5 of which are encoded in the nucleus.

Its subcellular location is the plastid. It is found in the chloroplast thylakoid membrane. The catalysed reaction is a plastoquinone + NADH + (n+1) H(+)(in) = a plastoquinol + NAD(+) + n H(+)(out). It catalyses the reaction a plastoquinone + NADPH + (n+1) H(+)(in) = a plastoquinol + NADP(+) + n H(+)(out). NDH shuttles electrons from NAD(P)H:plastoquinone, via FMN and iron-sulfur (Fe-S) centers, to quinones in the photosynthetic chain and possibly in a chloroplast respiratory chain. The immediate electron acceptor for the enzyme in this species is believed to be plastoquinone. Couples the redox reaction to proton translocation, and thus conserves the redox energy in a proton gradient. The chain is NAD(P)H-quinone oxidoreductase subunit H, chloroplastic from Populus alba (White poplar).